We begin with the raw amino-acid sequence, 321 residues long: Mitochondrial thiamine pyrophosphate carrier 1 (321 aa).

Solcar repeat units follow at residues 12-110, 121-207, and 216-311; these read GSRQ…ISQM, PSSA…LKPV, and PLGS…AMGI. Helical transmembrane passes span 17-38, 91-107, 127-147, 182-199, 213-231, and 286-303; these read VVVA…LDVI, LLYL…YTNI, FISG…LDLL, GLGA…LFFA, LPLP…ASVV, and GLTV…VTMW.

Belongs to the mitochondrial carrier (TC 2.A.29) family.

The protein resides in the mitochondrion inner membrane. In terms of biological role, mitochondrial transporter that mediates uptake of thiamine pyrophosphate (ThPP) into mitochondria. The protein is Mitochondrial thiamine pyrophosphate carrier 1 (TPC1) of Phaeosphaeria nodorum (strain SN15 / ATCC MYA-4574 / FGSC 10173) (Glume blotch fungus).